The sequence spans 162 residues: Putative 4-hydroxy-4-methyl-2-oxoglutarate aldolase (162 aa).

Residues 75–78 (GDML) and Arg97 each bind substrate. Asp98 contributes to the a divalent metal cation binding site.

This sequence belongs to the class II aldolase/RraA-like family. Homotrimer. A divalent metal cation serves as cofactor.

The enzyme catalyses 4-hydroxy-4-methyl-2-oxoglutarate = 2 pyruvate. It catalyses the reaction oxaloacetate + H(+) = pyruvate + CO2. Functionally, catalyzes the aldol cleavage of 4-hydroxy-4-methyl-2-oxoglutarate (HMG) into 2 molecules of pyruvate. Also contains a secondary oxaloacetate (OAA) decarboxylase activity due to the common pyruvate enolate transition state formed following C-C bond cleavage in the retro-aldol and decarboxylation reactions. This chain is Putative 4-hydroxy-4-methyl-2-oxoglutarate aldolase, found in Ectopseudomonas mendocina (strain ymp) (Pseudomonas mendocina).